A 797-amino-acid chain; its full sequence is Short transient receptor potential channel 4-associated protein (797 aa).

Alanine 2 is subject to N-acetylalanine. An interaction with TNFRSF1A region spans residues 2 to 400 (AAAPAAAGAG…VLYVLCVLLM (399 aa)).

As to quaternary structure, component of the DCX(TRPC4AP) E3 ubiquitin ligase complex, at least composed of CUL4A, DDB1, TRPC4AP/TRUSS and RBX1. Interacts with MYC. Constitutively associated with TNFRSF1A. Directly interacts with TRADD, TRAF2, CHUK, IKBKB and IKBKG. Interacts with TRPC1, TRPC4 and TRPC5. In terms of processing, phosphorylated by GSK3B; phosphorylation is required for ubiquitination. Ubiquitinated by a SCF (SKP1-CUL1-F-box protein) E3 ubiquitin-protein ligase containing SKP2, leading to its degradation. Phosphorylation by GSK3B is required for ubiquitination. Widely expressed, with high levels in heart, liver and testis.

The protein resides in the cytoplasm. It is found in the perinuclear region. It functions in the pathway protein modification; protein ubiquitination. Substrate-recognition component of a DCX (DDB1-CUL4-X-box) E3 ubiquitin-protein ligase complex required for cell cycle control. The DCX(TRPC4AP) complex specifically mediates the polyubiquitination and subsequent degradation of MYC as part of the DesCEND (destruction via C-end degrons) pathway. The DesCEND (destruction via C-end degrons) pathway recognizes a C-degron located at the extreme C terminus of target proteins, leading to their ubiquitination and degradation. The DCX(TRPC4AP) complex specifically recognizes proteins with an arginine at the minus 3 position (R-3 motif) at the C-terminus, such as MYC, leading to their ubiquitination and degradation. Also participates in the activation of NFKB1 in response to ligation of TNFRSF1A, possibly by linking TNFRSF1A to the IKK signalosome. Involved in JNK activation via its interaction with TRAF2. Also involved in elevation of endoplasmic reticulum Ca(2+) storage reduction in response to CHRM1. The polypeptide is Short transient receptor potential channel 4-associated protein (Mus musculus (Mouse)).